The following is a 524-amino-acid chain: Unconventional prefoldin RPB5 interactor (524 aa).

Disordered regions lie at residues 1–20 (MEAP…LRAP), 284–320 (SVNG…EDNS), and 335–373 (VRIN…ELPM). Positions 296–307 (DDGDNNDDGGDS) are enriched in acidic residues. Serine 361 bears the Phosphoserine; by RPS6KB1 mark. Phosphoserine is present on serine 431.

It belongs to the RNA polymerase II subunit 5-mediating protein family. As to quaternary structure, homodimer. Component of the PAQosome complex which is responsible for the biogenesis of several protein complexes and which consists of R2TP complex members RUVBL1, RUVBL2, RPAP3 and PIH1D1, URI complex members PFDN2, PFDN6, PDRG1, UXT and URI1 as well as ASDURF, POLR2E and DNAAF10/WDR92. Interacts with POLR2E/RPB5, RUVBL2 and RUVBL1. Interacts with PFDN2, PFDN4 and STAP1; the interactions are phosphorylation-dependent and occur in a growth-dependent manner in the mitochondrion. Interacts with UXT. Interacts with PPP1CC; the interaction is phosphorylation-dependent and occurs in a growth factor-dependent manner. Interacts (via the middle C-terminal region) with GTF2F1 and GTF2F2. Interacts with DMAP1. Interacts with TSC1 and TSC2. Interacts with PRPF8 and EFTUD2 in a ZNHIT2-dependent manner. Post-translationally, phosphorylated. Phosphorylation occurs essentially on serine residues. Phosphorylation occurs in response to androgen treatment in prostate cancer cells in a mTOR-dependent manner. Phosphorylated; hyperhosphorylated in mitochondria in a mTORC-dependent signaling pathway. Phosphorylated at Ser-361 by RPS6KB1 in a growth factor- and rapamycin-dependent manner. S6K1-mediated mitochondrial phosphorylation at Ser-361 disrupts the URI1-PPP1CC complex in the mitochondrion, relieves PPP1CC phosphatase inhibition activity and hence engages a negative feedback diminishing RPS6KB1 kinase activity, preventing sustained S6K1-dependent signaling.

It is found in the nucleus. Its subcellular location is the cytoplasm. The protein resides in the mitochondrion. It localises to the cell projection. The protein localises to the dendrite. In terms of biological role, involved in gene transcription regulation. Acts as a transcriptional repressor in concert with the corepressor UXT to regulate androgen receptor (AR) transcription. May act as a tumor suppressor to repress AR-mediated gene transcription and to inhibit anchorage-independent growth in prostate cancer cells. Required for cell survival in ovarian cancer cells. Together with UXT, associates with chromatin to the NKX3-1 promoter region. Functionally, plays a central role in maintaining S6K1 signaling and BAD phosphorylation under normal growth conditions thereby protecting cells from potential deleterious effects of sustained S6K1 signaling. The URI1-PPP1CC complex acts as a central component of a negative feedback mechanism that counteracts excessive S6K1 survival signaling to BAD in response to growth factors. Mediates inhibition of PPP1CC phosphatase activity in mitochondria. Coordinates the regulation of nutrient-sensitive gene expression availability in a mTOR-dependent manner. Seems to be a scaffolding protein able to assemble a prefoldin-like complex that contains PFDs and proteins with roles in transcription and ubiquitination. This is Unconventional prefoldin RPB5 interactor (URI1) from Bos taurus (Bovine).